The chain runs to 121 residues: Large ribosomal subunit protein bL12 (121 aa).

The protein belongs to the bacterial ribosomal protein bL12 family. In terms of assembly, homodimer. Part of the ribosomal stalk of the 50S ribosomal subunit. Forms a multimeric L10(L12)X complex, where L10 forms an elongated spine to which 2 to 4 L12 dimers bind in a sequential fashion. Binds GTP-bound translation factors.

Its function is as follows. Forms part of the ribosomal stalk which helps the ribosome interact with GTP-bound translation factors. Is thus essential for accurate translation. In Tolumonas auensis (strain DSM 9187 / NBRC 110442 / TA 4), this protein is Large ribosomal subunit protein bL12.